We begin with the raw amino-acid sequence, 130 residues long: Small ribosomal subunit protein uS8 (130 aa).

Belongs to the universal ribosomal protein uS8 family. As to quaternary structure, part of the 30S ribosomal subunit. Contacts proteins S5 and S12.

In terms of biological role, one of the primary rRNA binding proteins, it binds directly to 16S rRNA central domain where it helps coordinate assembly of the platform of the 30S subunit. The protein is Small ribosomal subunit protein uS8 of Buchnera aphidicola subsp. Acyrthosiphon pisum (strain 5A).